Consider the following 91-residue polypeptide: Small ribosomal subunit protein uS19 (91 aa).

Belongs to the universal ribosomal protein uS19 family.

Its function is as follows. Protein S19 forms a complex with S13 that binds strongly to the 16S ribosomal RNA. The protein is Small ribosomal subunit protein uS19 of Leptothrix cholodnii (strain ATCC 51168 / LMG 8142 / SP-6) (Leptothrix discophora (strain SP-6)).